The following is a 200-amino-acid chain: Vacuolar iron transporter homolog 1 (200 aa).

Residues 1–34 (MESHNVSNSLNLDMEMDQEKAFDYSKRAQWLRAA) lie on the Cytoplasmic side of the membrane. Residues 35-55 (VLGANDGLVSTASLMMGVGAV) traverse the membrane as a helical segment. The Vacuolar segment spans residues 56-62 (KQDVKVM). Residues 63-83 (ILSGFAGLVAGACSMAIGEFV) traverse the membrane as a helical segment. Over 84–116 (SVYSQYDIEVAQMKRENGGQVEKEKLPSPMQAA) the chain is Cytoplasmic. The helical transmembrane segment at 117 to 137 (AASALAFSLGAIVPLMAAAFV) threads the bilayer. Residues 138-143 (KDYHVR) lie on the Vacuolar side of the membrane. Residues 144–164 (IGAIVAAVTLALVMFGWLGAV) traverse the membrane as a helical segment. Residues 165-176 (LGKAPVFKSSAR) lie on the Cytoplasmic side of the membrane. The chain crosses the membrane as a helical span at residues 177 to 197 (VLIGGWLAMAVTFGLTKLIGT). The Vacuolar portion of the chain corresponds to 198–200 (HSL).

The protein belongs to the CCC1 family. In terms of tissue distribution, expressed in the vascular bundles of the shoot and the stele of the root. Expressed in inflorescences and at lower levels in leaves.

It localises to the vacuole membrane. It carries out the reaction Fe(2+)(in) = Fe(2+)(out). Functionally, vacuolar iron transporter involved in the transfer of iron ions from the cytosol to the vacuole for intracellular iron storage. Involved in regulation of cellular iron homeostasis. Vacuolar iron storage is required for seed embryo and seedling development. The protein is Vacuolar iron transporter homolog 1 of Arabidopsis thaliana (Mouse-ear cress).